The following is a 341-amino-acid chain: Processive diacylglycerol beta-glycosyltransferase (341 aa).

This sequence belongs to the glycosyltransferase 2 family. The cofactor is Mg(2+).

It localises to the cell membrane. The catalysed reaction is a 1,2-diacyl-sn-glycerol + UDP-alpha-D-glucose = a 1,2-diacyl-3-O-(beta-D-glucopyranosyl)-sn-glycerol + UDP + H(+). The enzyme catalyses a 1,2-diacyl-sn-glycerol + UDP-alpha-D-galactose = a 1,2-diacyl-3-O-(beta-D-galactosyl)-sn-glycerol + UDP + H(+). It catalyses the reaction a 1,2-diacyl-3-O-(beta-D-galactosyl)-sn-glycerol + UDP-alpha-D-glucose = a 1,2-diacyl-3-O-[beta-D-glucopyranosyl-(1-&gt;6)-beta-D-galactopyranosyl]-sn-glycerol + UDP + H(+). It carries out the reaction a 1,2-diacyl-3-O-(beta-D-galactosyl)-sn-glycerol + UDP-alpha-D-galactose = a 1,2-diacyl-3-O-[beta-D-galactosyl-(1-&gt;6)-beta-D-galactosyl]-sn-glycerol + UDP + H(+). With respect to regulation, activated by the negatively charged lipid phosphatidylglycerol (PG). Processive glycosyltransferase involved in the biosynthesis of both the non-bilayer-prone beta-monoglycosyldiacylglycerol and the bilayer-forming membrane lipid glucosyl-galactosyldiacylglycerol and digalactosyl-diacylglycerol. These components contribute to regulate the properties and stability of the membrane. Catalyzes sequentially the transfers of glucosyl or galactosyl residues from UDP-Glc or UDP-Gal to diacylglycerol (DAG) acceptor to form the corresponding beta-glycosyl-DAG (3-O-(beta-D-glycopyranosyl)-1,2-diacyl-sn-glycerol). Then, only beta-galactosyl-DAG (3-O-(beta-D-galactopyranosyl)-1,2-diacyl-sn-glycerol) can act as acceptor to give the beta-glycosyl-beta-galactosyl-DAG product (3-O-(beta-D-glycopyranosyl-(1-&gt;6)-D-galactopyranosyl)-1,2-diacyl-sn-glycerol). It can also use alpha-Gal-beta-Gal-DAG, ceramide (Cer) and beta-Gal-Cer as sugar acceptors. The enzyme is supposed to be mainly a galactosyltransferase, with higher glycosyltransferase activity for the addition of the second glycosyl on beta-Gal-DAG as acceptor. The main glycolipid produced in vivo is beta-Glc-beta-Gal-DAG with a beta-1,6 linkage. In Mycoplasma pneumoniae (strain ATCC 29342 / M129 / Subtype 1) (Mycoplasmoides pneumoniae), this protein is Processive diacylglycerol beta-glycosyltransferase.